The chain runs to 248 residues: MTEANRILLGVNIDHVATLRQARGTRYPDPLKAALDAEEAGADGITVHLREDRRHIQERDVRVLKEVLQTRMNFEMGVTEEMLAFAELIRPAHACFVPETRQELTTEGGLDVAGQEARIRAAVERLARIGCEVSLFIDAEPQQIEAAARIGAPAVELHTGRYADARTPAETARELARIRDGVEYGLSHGLIVNAGHGLHYHNVEPVAAIPGMHELNIGHAIVAHALFVGFKAAVQEMKLLMVGAASRR.

Asparagine 12 contacts 3-amino-2-oxopropyl phosphate. 14 to 15 serves as a coordination point for 1-deoxy-D-xylulose 5-phosphate; sequence DH. Position 23 (arginine 23) interacts with 3-amino-2-oxopropyl phosphate. The active-site Proton acceptor is histidine 48. Residues arginine 50 and histidine 55 each coordinate 1-deoxy-D-xylulose 5-phosphate. Glutamate 75 serves as the catalytic Proton acceptor. Threonine 105 is a 1-deoxy-D-xylulose 5-phosphate binding site. Histidine 196 serves as the catalytic Proton donor. 3-amino-2-oxopropyl phosphate contacts are provided by residues glycine 197 and 218-219; that span reads GH.

This sequence belongs to the PNP synthase family. Homooctamer; tetramer of dimers.

The protein localises to the cytoplasm. It carries out the reaction 3-amino-2-oxopropyl phosphate + 1-deoxy-D-xylulose 5-phosphate = pyridoxine 5'-phosphate + phosphate + 2 H2O + H(+). Its pathway is cofactor biosynthesis; pyridoxine 5'-phosphate biosynthesis; pyridoxine 5'-phosphate from D-erythrose 4-phosphate: step 5/5. Its function is as follows. Catalyzes the complicated ring closure reaction between the two acyclic compounds 1-deoxy-D-xylulose-5-phosphate (DXP) and 3-amino-2-oxopropyl phosphate (1-amino-acetone-3-phosphate or AAP) to form pyridoxine 5'-phosphate (PNP) and inorganic phosphate. The sequence is that of Pyridoxine 5'-phosphate synthase from Azotobacter vinelandii (strain DJ / ATCC BAA-1303).